Consider the following 336-residue polypeptide: Flavonoid 4'-O-methyltransferase 3 (336 aa).

2 residues coordinate S-adenosyl-L-methionine: Tyr-140 and Asp-203. The Proton acceptor role is filled by His-241.

Belongs to the class I-like SAM-binding methyltransferase superfamily. Cation-independent O-methyltransferase family. Homodimer. Expressed in leaves.

The enzyme catalyses scutellarein 7-methyl ether + S-adenosyl-L-methionine = ladanein + S-adenosyl-L-homocysteine + H(+). It catalyses the reaction cirsimaritin + S-adenosyl-L-methionine = salvigenin + S-adenosyl-L-homocysteine + H(+). The catalysed reaction is cirsiliol + S-adenosyl-L-methionine = eupatorin + S-adenosyl-L-homocysteine + H(+). It carries out the reaction genkwanin + S-adenosyl-L-methionine = apigenin 4',7-dimethyl ether + S-adenosyl-L-homocysteine. It functions in the pathway flavonoid metabolism. Its activity is regulated as follows. Substrate inhibition by genkwanin (GENK) at concentrations above 2.5 mM. Functionally, flavonoid 4'-O-methyltransferase involved in the biosynthesis of polymethoxylated flavonoids natural products such as nevadensin and salvigenin, aroma compounds which contribute to the flavor of sweet basil, and exhibit pharmacological activities such as anti-allergic, anti-oxidant, antibacterial, anti-proliferative, and anti-inflammatory effects. Catalyzes S-adenosylmethionine-dependent regioselective 4'-O-methylation of flavonoids; active on various hydroxylated flavonoid substrates, including scutellarein-7-methyl ether (SCU7Me) and cirsimaritin (CIRM), and, with a lower efficiency, hispidulin, ladanein (LAD), cirsioliol (CIRL) and genkwanin (GENK). This Ocimum basilicum (Sweet basil) protein is Flavonoid 4'-O-methyltransferase 3.